Consider the following 554-residue polypeptide: Raftlin (554 aa).

The N-myristoyl glycine moiety is linked to residue glycine 2. Residue cysteine 3 is the site of S-palmitoyl cysteine attachment. Residues serine 183 and serine 199 each carry the phosphoserine modification. 3 disordered regions span residues 192-249 (CTLG…NEAG), 441-488 (KKRE…DQFS), and 504-554 (GRAS…TEAN). 2 stretches are compositionally biased toward basic and acidic residues: residues 198–209 (SSLENDTPKAAE) and 475–487 (QAEE…EDQF). Phosphoserine is present on residues serine 507 and serine 530. Basic and acidic residues predominate over residues 526 to 542 (HNRDSVALRHSNPRAEA).

Belongs to the raftlin family. As to quaternary structure, interacts with TLR4; the interaction occurs in response to lipopolysaccharide stimulation. Interacts with CLTC; the interaction occurs in response to pathogens. Interacts with AP2A1 and AP2B1. In terms of tissue distribution, expressed in T-cells, B-cells, thymus and spleen (at protein level). Expressed in dendritic cells, macrophages, heart, lung and small intestine.

The protein localises to the cell membrane. It is found in the cytoplasm. Its subcellular location is the membrane raft. It localises to the endosome. The protein resides in the early endosome. Involved in protein trafficking via association with clathrin and AP2 complex. Upon bacterial lipopolysaccharide stimulation, mediates internalization of TLR4 to endosomes in dendritic cells and macrophages, and internalization of poly(I:C) to TLR3-positive endosomes in myeloid dendritic cells and epithelial cells; resulting in activation of TICAM1-mediated signaling and subsequent IFNB1 production. Involved in T-cell antigen receptor-mediated signaling by regulating tyrosine kinase LCK localization, T-cell dependent antibody production and cytokine secretion. May regulate B-cell antigen receptor-mediated signaling. May play a pivotal role in the formation and/or maintenance of lipid rafts. This is Raftlin (Rftn1) from Mus musculus (Mouse).